The primary structure comprises 304 residues: Glutaminase (304 aa).

Substrate-binding residues include serine 63, asparagine 114, glutamate 158, asparagine 165, tyrosine 189, tyrosine 240, and valine 258.

The protein belongs to the glutaminase family. In terms of assembly, homotetramer.

The enzyme catalyses L-glutamine + H2O = L-glutamate + NH4(+). This is Glutaminase from Shewanella baltica (strain OS223).